We begin with the raw amino-acid sequence, 257 residues long: Type III pantothenate kinase (257 aa).

An ATP-binding site is contributed by 24-31; sequence MIGNSRLH. Residues Y96 and 100–103 each bind substrate; that span reads GIDR. D102 serves as the catalytic Proton acceptor. D122 contributes to the K(+) binding site. Position 125 (T125) interacts with ATP. T180 contacts substrate.

This sequence belongs to the type III pantothenate kinase family. In terms of assembly, homodimer. The cofactor is NH4(+). K(+) serves as cofactor.

It localises to the cytoplasm. The catalysed reaction is (R)-pantothenate + ATP = (R)-4'-phosphopantothenate + ADP + H(+). Its pathway is cofactor biosynthesis; coenzyme A biosynthesis; CoA from (R)-pantothenate: step 1/5. Catalyzes the phosphorylation of pantothenate (Pan), the first step in CoA biosynthesis. This chain is Type III pantothenate kinase, found in Synechocystis sp. (strain ATCC 27184 / PCC 6803 / Kazusa).